We begin with the raw amino-acid sequence, 289 residues long: Inorganic pyrophosphatase (289 aa).

N-acetylserine is present on Ser-2. The residue at position 57 (Lys-57) is an N6-acetyllysine. Positions 116, 121, and 153 each coordinate Mg(2+). At Ser-250 the chain carries Phosphoserine.

Belongs to the PPase family. Homodimer. Requires Mg(2+) as cofactor. Post-translationally, the N-terminus is blocked. As to expression, highest levels are found in retinal rod outer segments.

Its subcellular location is the cytoplasm. The enzyme catalyses diphosphate + H2O = 2 phosphate + H(+). In Bos taurus (Bovine), this protein is Inorganic pyrophosphatase (PPA1).